The primary structure comprises 62 residues: Sperm protamine P1 (62 aa).

A disordered region spans residues 1–46 (MARCRRHSRSRSRSRNQCQRRRRRHYNRRRTYRRSRRHSRRRRVRR).

This sequence belongs to the protamine P1 family. In terms of tissue distribution, testis.

It is found in the nucleus. The protein resides in the chromosome. Its function is as follows. Protamines substitute for histones in the chromatin of sperm during the haploid phase of spermatogenesis. They compact sperm DNA into a highly condensed, stable and inactive complex. This Planigale gilesi (Flat-skulled marsupial mouse) protein is Sperm protamine P1 (PRM1).